Here is a 96-residue protein sequence, read N- to C-terminus: Uteroglobin (96 aa).

A signal peptide spans 1-21 (MKIAITMAVVMLSVCCSSASS).

The protein belongs to the secretoglobin family. As to quaternary structure, antiparallel homodimer; disulfide-linked. Interaction with LMBR1L is controversial.

It is found in the secreted. Functionally, binds phosphatidylcholine, phosphatidylinositol, polychlorinated biphenyls (PCB) and weakly progesterone, potent inhibitor of phospholipase A2. This chain is Uteroglobin (SCGB1A1), found in Mesocricetus auratus (Golden hamster).